We begin with the raw amino-acid sequence, 241 residues long: Uridylate kinase (241 aa).

14–17 (KLSG) provides a ligand contact to ATP. A UMP-binding site is contributed by G56. Residues G57 and R61 each contribute to the ATP site. Residues D77 and 138–145 (TGNPFFTT) contribute to the UMP site. The ATP site is built by T165, Y171, and D174.

It belongs to the UMP kinase family. As to quaternary structure, homohexamer.

It is found in the cytoplasm. It carries out the reaction UMP + ATP = UDP + ADP. Its pathway is pyrimidine metabolism; CTP biosynthesis via de novo pathway; UDP from UMP (UMPK route): step 1/1. Its activity is regulated as follows. Inhibited by UTP. In terms of biological role, catalyzes the reversible phosphorylation of UMP to UDP. This Psychrobacter cryohalolentis (strain ATCC BAA-1226 / DSM 17306 / VKM B-2378 / K5) protein is Uridylate kinase.